The primary structure comprises 183 residues: Dual-action ribosomal maturation protein DarP (183 aa).

The protein belongs to the DarP family.

Its subcellular location is the cytoplasm. In terms of biological role, member of a network of 50S ribosomal subunit biogenesis factors which assembles along the 30S-50S interface, preventing incorrect 23S rRNA structures from forming. Promotes peptidyl transferase center (PTC) maturation. The sequence is that of Dual-action ribosomal maturation protein DarP from Salmonella arizonae (strain ATCC BAA-731 / CDC346-86 / RSK2980).